The following is a 314-amino-acid chain: Acetyl-coenzyme A carboxylase carboxyl transferase subunit alpha (314 aa).

Residues 32 to 289 (EIDMLEASLA…KRTFESHLSE (258 aa)) form the CoA carboxyltransferase C-terminal domain.

This sequence belongs to the AccA family. Acetyl-CoA carboxylase is a heterohexamer composed of biotin carboxyl carrier protein (AccB), biotin carboxylase (AccC) and two subunits each of ACCase subunit alpha (AccA) and ACCase subunit beta (AccD).

The protein resides in the cytoplasm. The catalysed reaction is N(6)-carboxybiotinyl-L-lysyl-[protein] + acetyl-CoA = N(6)-biotinyl-L-lysyl-[protein] + malonyl-CoA. The protein operates within lipid metabolism; malonyl-CoA biosynthesis; malonyl-CoA from acetyl-CoA: step 1/1. In terms of biological role, component of the acetyl coenzyme A carboxylase (ACC) complex. First, biotin carboxylase catalyzes the carboxylation of biotin on its carrier protein (BCCP) and then the CO(2) group is transferred by the carboxyltransferase to acetyl-CoA to form malonyl-CoA. This Staphylococcus saprophyticus subsp. saprophyticus (strain ATCC 15305 / DSM 20229 / NCIMB 8711 / NCTC 7292 / S-41) protein is Acetyl-coenzyme A carboxylase carboxyl transferase subunit alpha.